We begin with the raw amino-acid sequence, 43 residues long: Phi-Lf prophage-derived putative minor coat protein (43 aa).

The protein is Phi-Lf prophage-derived putative minor coat protein (gVII-1) of Xanthomonas campestris pv. campestris (strain ATCC 33913 / DSM 3586 / NCPPB 528 / LMG 568 / P 25).